The primary structure comprises 214 residues: UPF0301 protein blr1492 (214 aa).

Positions 1–22 (MAPTGKRTGESTRSTGPAPPSS) are disordered.

This sequence belongs to the UPF0301 (AlgH) family.

This is UPF0301 protein blr1492 from Bradyrhizobium diazoefficiens (strain JCM 10833 / BCRC 13528 / IAM 13628 / NBRC 14792 / USDA 110).